The chain runs to 501 residues: Fumarate reductase 2 (501 aa).

Residues 1 to 32 constitute a mitochondrion transit peptide; sequence MIRSVRRVFIYVSIFVLIIVLKRTLSGTDQTS. 37–51 provides a ligand contact to FAD; it reads VVVIGSGLAGLTTSN. Catalysis depends on residues H281 and R304.

It belongs to the FAD-dependent oxidoreductase 2 family. FRD/SDH subfamily. It depends on FAD as a cofactor.

The protein localises to the mitochondrion. The catalysed reaction is succinate + NAD(+) = fumarate + NADH + H(+). In terms of biological role, irreversibly catalyzes the reduction of fumarate to succinate. Together with the second isozyme of soluble fumarate reductase (FRD1), essential for anaerobic growth. Involved in maintaining redox balance during oxygen deficiency conditions. Reduction of fumarate is the main source of succinate during fermentation, and under anaerobic conditions, the formation of succinate is strictly required for the reoxidation of FADH(2). The sequence is that of Fumarate reductase 2 (OSM1) from Saccharomyces cerevisiae (strain ATCC 204508 / S288c) (Baker's yeast).